We begin with the raw amino-acid sequence, 186 residues long: Adenine phosphoribosyltransferase (186 aa).

This sequence belongs to the purine/pyrimidine phosphoribosyltransferase family. In terms of assembly, homodimer.

The protein resides in the cytoplasm. It carries out the reaction AMP + diphosphate = 5-phospho-alpha-D-ribose 1-diphosphate + adenine. Its pathway is purine metabolism; AMP biosynthesis via salvage pathway; AMP from adenine: step 1/1. In terms of biological role, catalyzes a salvage reaction resulting in the formation of AMP, that is energically less costly than de novo synthesis. This Xanthomonas euvesicatoria pv. vesicatoria (strain 85-10) (Xanthomonas campestris pv. vesicatoria) protein is Adenine phosphoribosyltransferase.